Reading from the N-terminus, the 337-residue chain is HTH-type transcriptional repressor PurR (337 aa).

The region spanning alanine 2–cysteine 56 is the HTH lacI-type domain. The segment at residues isoleucine 4–asparagine 23 is a DNA-binding region (H-T-H motif). Residues serine 48–cysteine 56 mediate DNA binding. Hypoxanthine-binding residues include phenylalanine 73, lysine 189, threonine 191, phenylalanine 220, and aspartate 276.

Homodimer.

The protein operates within purine metabolism; purine nucleotide biosynthesis [regulation]. In terms of biological role, is the main repressor of the genes involved in the de novo synthesis of purine nucleotides, regulating purB, purC, purEK, purF, purHD, purL, purMN and guaBA expression. PurR is allosterically activated to bind its cognate DNA by binding the purine corepressors, hypoxanthine or guanine, thereby effecting transcription repression. The polypeptide is HTH-type transcriptional repressor PurR (Aliivibrio fischeri (strain MJ11) (Vibrio fischeri)).